Consider the following 142-residue polypeptide: uncharacterized protein (142 aa).

It localises to the mitochondrion. This is an uncharacterized protein from Mus musculus (Mouse).